The following is a 941-amino-acid chain: Cilia- and flagella-associated protein 69 (941 aa).

Over residues 1-10 (MWTEEAAATA) the composition is skewed to low complexity. A disordered region spans residues 1 to 23 (MWTEEAAATAEARESGIRNKSSS).

Its subcellular location is the cell projection. It is found in the cilium. The protein resides in the flagellum. Cilium- and flagellum-associated protein. In the olfactory epithelium, regulates the speed of activation and termination of the odor response and thus contributes to the robustness of olfactory transduction pathways. Required for sperm flagellum assembly and stability. This chain is Cilia- and flagella-associated protein 69, found in Papio anubis (Olive baboon).